A 212-amino-acid chain; its full sequence is Protein RER1C (212 aa).

An N-acetylmethionine modification is found at methionine 1. 4 helical membrane passes run 55–75, 82–102, 135–155, and 157–177; these read TVPH…IYIV, GFYI…IAFL, EFKF…MTFF, and VFDV…LFFL.

It belongs to the RER1 family.

It is found in the membrane. In terms of biological role, involved in the retrieval of endoplasmic reticulum membrane proteins from the early Golgi compartment. The protein is Protein RER1C (RER1C) of Arabidopsis thaliana (Mouse-ear cress).